A 348-amino-acid polypeptide reads, in one-letter code: Phosphoribosylformylglycinamidine cyclo-ligase (348 aa).

Belongs to the AIR synthase family.

The protein localises to the cytoplasm. It catalyses the reaction 2-formamido-N(1)-(5-O-phospho-beta-D-ribosyl)acetamidine + ATP = 5-amino-1-(5-phospho-beta-D-ribosyl)imidazole + ADP + phosphate + H(+). The protein operates within purine metabolism; IMP biosynthesis via de novo pathway; 5-amino-1-(5-phospho-D-ribosyl)imidazole from N(2)-formyl-N(1)-(5-phospho-D-ribosyl)glycinamide: step 2/2. This Citrifermentans bemidjiense (strain ATCC BAA-1014 / DSM 16622 / JCM 12645 / Bem) (Geobacter bemidjiensis) protein is Phosphoribosylformylglycinamidine cyclo-ligase.